The primary structure comprises 174 residues: Anthrone oxygenase CPUR_05435 (174 aa).

A run of 4 helical transmembrane segments spans residues 13-33 (VALA…AIMI), 56-76 (YGSV…GFAS), 88-108 (CLAA…AMIP), and 140-160 (WVVL…MGFT).

This sequence belongs to the anthrone oxygenase family.

It localises to the membrane. The enzyme catalyses emodin anthrone + O2 = emodin + H2O + H(+). Anthrone oxygenase; part of the ergochrome gene cluster responsible for the typical purple-black color of the ergot sclerotia. The ergochrome gene cluster produces several ergot pigments including the yellow ergochrome secalonic acid and its derivatives, as well as the red anthraquinones endocrocin and clavorubin. The pathway begins with the synthesis of atrochrysone thioester by the polyketide synthase (PKS) CPUR_05437. The atrochrysone carboxyl ACP thioesterase CPUR_05436 then breaks the thioester bond and releases the atrochrysone carboxylic acid from CPUR_05437. The decarboxylase CPUR_05434 then catalyzes the concerted decarboxylation-elimination required to convert atochrysone carboxylic acid into emodin anthrone, which is further oxidized to emodin by the anthrone oxygenase CPUR_05435. Emodin is further modified to yield monodictyphenone via several steps involving CPUR_05427, CPUR_05428, CPUR_05429 and CPUR_05430. The short chain dehydrogenase/reductase CPUR_05418 then catalyzes the C-5 ketoreduction to give the xanthone skeleton of the monomeric units. Ergochromes formation requires further dimerization steps of different xanthone units, probably catalyzed by the cytochrome P450 monooxygenase CPUR_05419. CPUR_05425, CPUR_05426 and CPUR_05431 are unique to Claviceps, thus it is likely that they are involved in further modification of xanthone units or in their dimerization. The yellow ergochromes and the red anthraquinone pigments endocrocin and clavorubin are products from the same PKS derived precursors and the latter are likely shunt products in the pathway of xanthone biosynthesis. It is proposed that atrochrysone carboxylic acid released from the PKS CPUR_05437 can also be converted to endocrocin anthrone which is further oxidized into endocrocin by CPUR_05435. Endocrocin could be then modified to clavorubin, possibly by CPUR_05423 and CPUR_05431. Clavorubin is the principal anthraquinone metabolite produced by the cluster with a much higher yield compared to endocrocin. The chain is Anthrone oxygenase CPUR_05435 from Claviceps purpurea (strain 20.1) (Ergot fungus).